The following is a 252-amino-acid chain: Auxin-induced in root cultures protein 12 (252 aa).

A signal peptide spans 1–25 (MASSSSSLLILAVACFVSLISPAIS). Residues 49-165 (LNSYLHYTYN…DSVNQVWQIG (117 aa)) enclose the DOMON domain. N-linked (GlcNAc...) asparagine glycans are attached at residues Asn-58 and Asn-61. Met-91 provides a ligand contact to heme. N-linked (GlcNAc...) asparagine glycans are attached at residues Asn-114 and Asn-167. Position 176 (His-176) interacts with heme. The interval 193-224 (EDAAPGSAPSPGSAPAPGTSGSTTPGTAAGGP) is disordered. The segment covering 195 to 219 (AAPGSAPSPGSAPAPGTSGSTTPGT) has biased composition (low complexity). Asn-226 carries GPI-anchor amidated asparagine lipidation. Positions 227–252 (AGSLTRNVNFGVNLGILVLLGSIFIF) are cleaved as a propeptide — removed in mature form.

The cofactor is heme.

It is found in the cell membrane. Functionally, one-heme-containing cytochrome. This is Auxin-induced in root cultures protein 12 (AIR12) from Arabidopsis thaliana (Mouse-ear cress).